The primary structure comprises 82 residues: Large ribosomal subunit protein bL27 (82 aa).

The interval 1 to 21 (MAHKKGASSSRNGRDSNAKRL) is disordered.

Belongs to the bacterial ribosomal protein bL27 family.

The chain is Large ribosomal subunit protein bL27 from Tropheryma whipplei (strain Twist) (Whipple's bacillus).